The chain runs to 282 residues: Pantothenate synthetase (282 aa).

30-37 provides a ligand contact to ATP; the sequence is MGNLHEGH. The active-site Proton donor is the H37. A (R)-pantoate-binding site is contributed by Q61. Q61 provides a ligand contact to beta-alanine. Position 149–152 (149–152) interacts with ATP; the sequence is GEKD. Q155 is a binding site for (R)-pantoate. ATP contacts are provided by residues V178 and 186–189; that span reads KSSR.

It belongs to the pantothenate synthetase family. As to quaternary structure, homodimer.

It localises to the cytoplasm. The enzyme catalyses (R)-pantoate + beta-alanine + ATP = (R)-pantothenate + AMP + diphosphate + H(+). It participates in cofactor biosynthesis; (R)-pantothenate biosynthesis; (R)-pantothenate from (R)-pantoate and beta-alanine: step 1/1. Functionally, catalyzes the condensation of pantoate with beta-alanine in an ATP-dependent reaction via a pantoyl-adenylate intermediate. This chain is Pantothenate synthetase, found in Marinobacter nauticus (strain ATCC 700491 / DSM 11845 / VT8) (Marinobacter aquaeolei).